The following is a 486-amino-acid chain: MKALDQLTFDNRFARLGDAFSTQVLPEPIADPRLVVASESAMALLDLDPAQAELPVFAELFSGHKLWEEADPRAMVYSGHQFGSYNPRLGDGRGLLLAEVLNDVGEHWDLHLKGAGQTPYSRMGDGRAVLRSSIREFLASEALHALGIATSRALCVIGSSTPVWRETRESAAMLTRLAQSHVRFGHFEYFYYTKQPEQQRVLIDHVLEQHYPECRDAEQPYLAMFRTIVERNAELIARWQAYGFCHGVMNTDNMSILGITFDFGPYAFLDDFDANFICNHSDDRGRYSYANQVPIAHWNLSALAQALTTVIEVEPLKEALGLFLPLYQAHYLDLMRRRLGLTTAEDDDMALVERLLQCMQRGGVDYSLFFRKLGEQPVAEALKVARDDFIDLAGFDAWGADYLARCRREPGNAEGRRERMHAVNPLYVLRNYLAQKAIEAAEAGDYSEVRRLHQVLTRPFEEQPGMQAYAERPPEWGKHLEISCSS.

Residues G90, G92, R93, K113, D125, G126, R176, and R183 each contribute to the ATP site. D252 serves as the catalytic Proton acceptor. Mg(2+) contacts are provided by N253 and D262. D262 serves as a coordination point for ATP.

Belongs to the SELO family. The cofactor is Mg(2+). It depends on Mn(2+) as a cofactor.

The enzyme catalyses L-seryl-[protein] + ATP = 3-O-(5'-adenylyl)-L-seryl-[protein] + diphosphate. It catalyses the reaction L-threonyl-[protein] + ATP = 3-O-(5'-adenylyl)-L-threonyl-[protein] + diphosphate. It carries out the reaction L-tyrosyl-[protein] + ATP = O-(5'-adenylyl)-L-tyrosyl-[protein] + diphosphate. The catalysed reaction is L-histidyl-[protein] + UTP = N(tele)-(5'-uridylyl)-L-histidyl-[protein] + diphosphate. The enzyme catalyses L-seryl-[protein] + UTP = O-(5'-uridylyl)-L-seryl-[protein] + diphosphate. It catalyses the reaction L-tyrosyl-[protein] + UTP = O-(5'-uridylyl)-L-tyrosyl-[protein] + diphosphate. Functionally, nucleotidyltransferase involved in the post-translational modification of proteins. It can catalyze the addition of adenosine monophosphate (AMP) or uridine monophosphate (UMP) to a protein, resulting in modifications known as AMPylation and UMPylation. This is Protein nucleotidyltransferase YdiU from Pseudomonas putida (strain ATCC 700007 / DSM 6899 / JCM 31910 / BCRC 17059 / LMG 24140 / F1).